The primary structure comprises 59 residues: DNA gyrase inhibitor YacG (59 aa).

Positions 7, 10, 25, and 29 each coordinate Zn(2+).

This sequence belongs to the DNA gyrase inhibitor YacG family. Interacts with GyrB. It depends on Zn(2+) as a cofactor.

Functionally, inhibits all the catalytic activities of DNA gyrase by preventing its interaction with DNA. Acts by binding directly to the C-terminal domain of GyrB, which probably disrupts DNA binding by the gyrase. This chain is DNA gyrase inhibitor YacG, found in Geobacter sulfurreducens (strain ATCC 51573 / DSM 12127 / PCA).